Consider the following 390-residue polypeptide: 5-hydroxytryptamine receptor 1B (390 aa).

At 1–46 (MEEPGAQCAPPLAAGSQIAVPQANLSAAHSHNCSAEGYIYQDSIAL) the chain is on the extracellular side. N-linked (GlcNAc...) asparagine glycans are attached at residues Asn24 and Asn32. The chain crosses the membrane as a helical span at residues 47–72 (PWKVLLVLLLALFTLATTLSNAFVVA). At 73 to 86 (TVYRTRKLHTPANY) the chain is on the cytoplasmic side. A helical membrane pass occupies residues 87–111 (LIASLAVTDLLVSILVMPISTMYTV). The Extracellular portion of the chain corresponds to 112 to 119 (TGRWTLGQ). Residues 120–145 (VVCDLWLSSDITCCTASIMHLCVIAL) traverse the membrane as a helical segment. Cys122 and Cys199 form a disulfide bridge. Ergotamine is bound by residues Asp129 and Thr134. The DRY motif; important for ligand-induced conformation changes and signaling signature appears at 146-148 (DRY). Residues 146–165 (DRYWAITDAVEYSAKRTPKR) are Cytoplasmic-facing. The helical transmembrane segment at 166-184 (AAIMIRLVWVFSICISLPP) threads the bilayer. The Extracellular portion of the chain corresponds to 185 to 205 (FFWRQAKAEEEVSECLVNTDH). Val201 contacts ergotamine. The chain crosses the membrane as a helical span at residues 206-229 (VLYTVYSTVGAFYLPTLLLIALYG). Over 230 to 315 (RIYVEARSRI…AARERKATKT (86 aa)) the chain is Cytoplasmic. Over residues 260 to 272 (SPGSTTSVTSINS) the composition is skewed to polar residues. A disordered region spans residues 260-282 (SPGSTTSVTSINSRAPDVPSESG). The helical transmembrane segment at 316 to 337 (LGIILGVFIVCWLPFFIISLVM) threads the bilayer. At 338–347 (PICKDACWFH) the chain is on the extracellular side. The chain crosses the membrane as a helical span at residues 348–370 (QAIFDFFTWLGYVNSLINPIIYT). The NPxxY motif; important for ligand-induced conformation changes and signaling signature appears at 365-369 (NPIIY). Topologically, residues 371-390 (MSNEDFKQAFHKLIRFKCTS) are cytoplasmic. Cys388 is lipidated: S-palmitoyl cysteine.

Belongs to the G-protein coupled receptor 1 family. As to quaternary structure, homodimer. Heterodimer with HTR1D. Post-translationally, phosphorylated. Desensitization of the receptor may be mediated by its phosphorylation. In terms of processing, palmitoylated.

Its subcellular location is the cell membrane. In terms of biological role, G-protein coupled receptor for 5-hydroxytryptamine (serotonin). Also functions as a receptor for ergot alkaloid derivatives, various anxiolytic and antidepressant drugs and other psychoactive substances, such as lysergic acid diethylamide (LSD). Ligand binding causes a conformation change that triggers signaling via guanine nucleotide-binding proteins (G proteins) and modulates the activity of downstream effectors, such as adenylate cyclase. HTR1B is coupled to G(i)/G(o) G alpha proteins and mediates inhibitory neurotransmission by inhibiting adenylate cyclase activity. Arrestin family members inhibit signaling via G proteins and mediate activation of alternative signaling pathways. Regulates the release of 5-hydroxytryptamine, dopamine and acetylcholine in the brain, and thereby affects neural activity, nociceptive processing, pain perception, mood and behavior. Besides, plays a role in vasoconstriction of cerebral arteries. The polypeptide is 5-hydroxytryptamine receptor 1B (HTR1B) (Oryctolagus cuniculus (Rabbit)).